We begin with the raw amino-acid sequence, 480 residues long: Probable serine/threonine-protein phosphatase 2A regulatory subunit B'' subunit TON2 (480 aa).

EF-hand domains are found at residues 186–221, 294–329, and 369–404; these read VSLTQARIDMSELDEDSDGFLHSDEMESYIGGLIPN, TSAQRICDMFLALDKDMSGSLCKQELKEYADGTLTE, and DTPEGLTYLFRCLDLQGRGFLTTADIHSLFRDVHQK. 5 residues coordinate Ca(2+): Asp-307, Asp-309, Ser-311, Ser-313, and Glu-318.

As to quaternary structure, interacts with PP2AA1. In terms of tissue distribution, widely expressed.

The protein localises to the cytoplasm. It localises to the cytoskeleton. Probable regulatory subunit of type 2A protein phosphatase involved in the control of the dynamic organization of the cortical cytoskeleton. Plays an important role in the organization of interphase microtubule arrays in part through the regulation of nucleation geometry. Required for the reorganization of cortical arrays in response to light. In Arabidopsis thaliana (Mouse-ear cress), this protein is Probable serine/threonine-protein phosphatase 2A regulatory subunit B'' subunit TON2 (TON2).